The chain runs to 378 residues: DNA replication and repair protein RecF (378 aa).

Residue 30 to 37 (GRNGQGKT) participates in ATP binding.

This sequence belongs to the RecF family.

Its subcellular location is the cytoplasm. Functionally, the RecF protein is involved in DNA metabolism; it is required for DNA replication and normal SOS inducibility. RecF binds preferentially to single-stranded, linear DNA. It also seems to bind ATP. The sequence is that of DNA replication and repair protein RecF from Frankia alni (strain DSM 45986 / CECT 9034 / ACN14a).